Reading from the N-terminus, the 230-residue chain is Small ribosomal subunit protein uS3 (230 aa).

The region spanning 39 to 107 (IRKFLTEKLK…PAQINISEVR (69 aa)) is the KH type-2 domain.

Belongs to the universal ribosomal protein uS3 family. As to quaternary structure, part of the 30S ribosomal subunit. Forms a tight complex with proteins S10 and S14.

In terms of biological role, binds the lower part of the 30S subunit head. Binds mRNA in the 70S ribosome, positioning it for translation. This chain is Small ribosomal subunit protein uS3, found in Psychromonas ingrahamii (strain DSM 17664 / CCUG 51855 / 37).